Here is a 323-residue protein sequence, read N- to C-terminus: NADH-ubiquinone oxidoreductase chain 1 (323 aa).

A run of 8 helical transmembrane segments spans residues 9 to 29 (ILNP…LTLI), 76 to 96 (LFVL…PMPM), 107 to 127 (ILFV…SGWA), 145 to 165 (ISYE…SGGF), 175 to 195 (EATW…ISTL), 227 to 247 (LFFL…AVLF), 258 to 278 (EFTS…FLWV), and 298 to 318 (FLPL…ACAG).

The protein belongs to the complex I subunit 1 family.

The protein resides in the mitochondrion inner membrane. The enzyme catalyses a ubiquinone + NADH + 5 H(+)(in) = a ubiquinol + NAD(+) + 4 H(+)(out). Its function is as follows. Core subunit of the mitochondrial membrane respiratory chain NADH dehydrogenase (Complex I) that is believed to belong to the minimal assembly required for catalysis. Complex I functions in the transfer of electrons from NADH to the respiratory chain. The immediate electron acceptor for the enzyme is believed to be ubiquinone. This chain is NADH-ubiquinone oxidoreductase chain 1 (MT-ND1), found in Gadus morhua (Atlantic cod).